The primary structure comprises 1958 residues: Sodium channel protein type 10 subunit alpha (1958 aa).

Topologically, residues 1 to 125 are cytoplasmic; that stretch reads MEFPFGSVGT…FNLIRRTAIK (125 aa). The disordered stretch occupies residues 27–54; the sequence is QIAAHRAAKKGRPKQRGQKDKSEKPRPQ. Basic residues predominate over residues 32–42; sequence RAAKKGRPKQR. Positions 43–54 are enriched in basic and acidic residues; sequence GQKDKSEKPRPQ. One copy of the I repeat lies at 116-404; sequence FNLIRRTAIK…VTMAYEEQSQ (289 aa). Residues 126–149 form a helical membrane-spanning segment; sequence VSVHSWFSIFITVTILVNCVCMTR. The Extracellular segment spans residues 150-154; that stretch reads TDLPE. Residues 155–174 form a helical membrane-spanning segment; the sequence is KLEYAFTVVYTFEALIKILA. Over 175 to 187 the chain is Cytoplasmic; that stretch reads RGFCLNEFTYLRD. Residues 188–206 form a helical membrane-spanning segment; it reads PWNWLDFSVITLAYVGAAI. The Extracellular segment spans residues 207–212; it reads DLRGIS. A helical; Voltage-sensor membrane pass occupies residues 213–232; the sequence is GLRTFRVLRALKTVSVIPGL. The Cytoplasmic portion of the chain corresponds to 233 to 248; it reads KVIVGALIHSVRKLAD. The chain crosses the membrane as a helical span at residues 249 to 272; sequence VTILTVFCLSVFALVGLQLFKGNL. Over 273 to 340 the chain is Extracellular; the sequence is KNKCIKNGTD…PDFNYTSFDS (68 aa). Residues C276 and C318 are joined by a disulfide bond. Residues N279, N288, N311, and N334 are each glycosylated (N-linked (GlcNAc...) asparagine). The segment at residues 341 to 365 is an intramembrane region (pore-forming); that stretch reads FAWAFLSLFRLMTQDSWERLYQQTL. Residues 366–372 lie on the Extracellular side of the membrane; sequence RASGKMY. Residues 373–398 traverse the membrane as a helical segment; it reads MVFFVLVIFLGSFYLVNLILAVVTMA. Residues 399 to 658 are Cytoplasmic-facing; that stretch reads YEEQSQATIA…KWKKFKMVLF (260 aa). 4 positions are modified to phosphoserine: S440, S443, S466, and S478. 2 disordered regions span residues 444–483 and 539–583; these read HNGS…PYNQ and GRGA…APEG. Over residues 549-560 the composition is skewed to pro residues; it reads PRSPLPQSPNPG. A phosphoserine mark is found at S611 and S614. The stretch at 646-910 is one II repeat; the sequence is CCPKWKKFKM…EDDGEVNNLQ (265 aa). A helical transmembrane segment spans residues 659-683; it reads ELVTDPFAELTITLCIVVNTVFMAM. The Extracellular segment spans residues 684 to 694; the sequence is EHYPMTDAFDA. Residues 695–718 form a helical membrane-spanning segment; it reads MLQAGNIVFTVFFTMEMAFKIIAF. The Cytoplasmic portion of the chain corresponds to 719 to 726; it reads DPYYYFQK. A helical membrane pass occupies residues 727–746; that stretch reads KWNIFDCVIVTVSLLELSTS. Residues 747-752 are Extracellular-facing; that stretch reads KKGSLS. A helical; Voltage-sensor transmembrane segment spans residues 753 to 772; sequence VLRTFRLLRVFKLAKSWPTL. Residues 773-788 lie on the Cytoplasmic side of the membrane; sequence NMLIKIIGNSVGALGN. The helical transmembrane segment at 789–809 threads the bilayer; sequence LTFILAIIVFIFALVGKQLLS. Topologically, residues 810–833 are extracellular; it reads ENYGCRRDGISVWNGERLRWHMCD. The segment at residues 834 to 854 is an intramembrane region (pore-forming); it reads FFHSFLVVFRILCGEWIENMW. The Extracellular portion of the chain corresponds to 855 to 863; sequence VCMEVSQDY. The cysteines at positions 856 and 865 are disulfide-linked. A helical transmembrane segment spans residues 864 to 889; the sequence is ICLTLFLTVMVLGNLVVLNLFIALLL. Topologically, residues 890–1148 are cytoplasmic; that stretch reads NSFSADNLTA…GWQVRKTCYR (259 aa). The segment at 1006–1094 is disordered; it reads DLDELEEDVE…SEGSTVDCPD (89 aa). A compositionally biased stretch (polar residues) spans 1017–1038; it reads ASQSSWQEESPKGQQELLQQVQ. One copy of the III repeat lies at 1141-1450; it reads QVRKTCYRIV…KKYYNAMKKL (310 aa). A helical membrane pass occupies residues 1149 to 1172; the sequence is IVEHSWFESFIIFMILLSSGALAF. The Extracellular portion of the chain corresponds to 1173–1185; the sequence is EDNYLEEKPRVKS. Residues 1186 to 1211 form a helical membrane-spanning segment; sequence VLEYTDRVFTFIFVFEMLLKWVAYGF. Topologically, residues 1212-1217 are cytoplasmic; the sequence is KKYFTN. The helical transmembrane segment at 1218 to 1239 threads the bilayer; it reads AWCWLDFLIVNISLTSLIAKIL. Topologically, residues 1240 to 1243 are extracellular; it reads EYSD. The helical; Voltage-sensor transmembrane segment at 1244-1265 threads the bilayer; that stretch reads VASIKALRTLRALRPLRALSRF. Topologically, residues 1266-1284 are cytoplasmic; that stretch reads EGMRVVVDALVGAIPSIMN. Residues 1285–1312 form a helical membrane-spanning segment; the sequence is VLLVCLIFWLIFSIMGVNLFAGKFSRCV. The Extracellular portion of the chain corresponds to 1313-1354; sequence DTRSNPFSVVNSTFVTNKSDCYNQNNTGHFFWVNVKVNFDNV. N1323, N1329, and N1337 each carry an N-linked (GlcNAc...) asparagine glycan. An intramembrane region (pore-forming) is located at residues 1355–1376; that stretch reads AMGYLALLQVATFKGWMDIMYA. At 1377–1392 the chain is on the extracellular side; sequence AVDSRDINSQPNWEES. The helical transmembrane segment at 1393–1419 threads the bilayer; that stretch reads LYMYLYFVVFIIFGGFFTLNLFVGVII. Over 1420-1472 the chain is Cytoplasmic; it reads DNFNQQKKKLGGQDIFMTEEQKKYYNAMKKLGSKKPQKPIPRPLNKYQGFVFD. Phosphoserine; by PKC is present on S1452. The IV repeat unit spans residues 1459–1758; the sequence is IPRPLNKYQG…WEKFDPEATQ (300 aa). Residues 1473-1496 form a helical membrane-spanning segment; sequence IVTRQAFDIIIMALICLNMITMMV. Residues 1497–1507 lie on the Extracellular side of the membrane; it reads ETDNQSEEKTK. N-linked (GlcNAc...) asparagine glycosylation is present at N1500. The helical transmembrane segment at 1508–1531 threads the bilayer; the sequence is VLGRINQFFVAVFTGECVMKMFAL. Residues 1532–1537 lie on the Cytoplasmic side of the membrane; sequence RQYYFT. The chain crosses the membrane as a helical span at residues 1538–1561; sequence NGWNVFDFIVVILSISSLLFSAIL. Residues 1562–1573 lie on the Extracellular side of the membrane; sequence SSLESYFSPTLL. The helical; Voltage-sensor transmembrane segment at 1574–1595 threads the bilayer; sequence RVIRLARIGRILRLIRAAKGIR. Residues 1596–1610 lie on the Cytoplasmic side of the membrane; it reads TLLFALMMSLPALFN. The helical transmembrane segment at 1611–1633 threads the bilayer; sequence IGLLLFLVMFIYSIFGMASFANV. Residues 1634–1647 are Extracellular-facing; the sequence is IDEAGIDDMFNFKT. Positions 1648 to 1670 form an intramembrane region, pore-forming; it reads FGNSMLCLFQITTSAGWDGLLSP. The Extracellular segment spans residues 1671–1698; the sequence is ILNTGPPYCDPNRPNSNGSKGNCGSPAV. N1687 is a glycosylation site (N-linked (GlcNAc...) asparagine). The chain crosses the membrane as a helical span at residues 1699-1723; that stretch reads GILFFTTYIIISFLIVVNMYIAVIL. Topologically, residues 1724–1958 are cytoplasmic; sequence ENFNVATEES…AKEGKSPGPQ (235 aa). One can recognise an IQ domain in the interval 1852–1881; sequence EDISATIIQKAYRNYMLQRSLMLSNPLHVP. Residues 1901-1958 are disordered; that stretch reads NDNGGLPDKSETASATSFPPSYDSVTRGLSDRANISTSSSMQNEDEVTAKEGKSPGPQ. Residues 1933 to 1942 show a composition bias toward polar residues; sequence ANISTSSSMQ. Basic and acidic residues predominate over residues 1947–1958; sequence VTAKEGKSPGPQ.

It belongs to the sodium channel (TC 1.A.1.10) family. Nav1.8/SCN10A subfamily. As to quaternary structure, the channel consists of an ion conducting pore forming alpha-subunit regulated by one or more associated auxiliary subunits SCN1B, SCN2B and SCN3B; electrophysiological properties may vary depending on the type of the associated beta subunits. Found in a number of complexes with PRX, DYNLT1 and PDZD2. Interacts with proteins such as FSTL1, PRX, DYNLT1, PDZD2, S100A10 and many others. Interacts with NEDD4 and NEDD4L. In terms of processing, ubiquitinated by NEDD4L; which promotes its endocytosis. Phosphorylation at Ser-1452 by PKC in a highly conserved cytoplasmic loop slows inactivation of the sodium channel and reduces peak sodium currents. Post-translationally, lacks the cysteine which covalently binds the conotoxin GVIIJ. This cysteine (position 815) is speculated in other sodium channel subunits alpha to be implied in covalent binding with the sodium channel subunit beta-2 or beta-4. Expressed in dorsal root ganglion and trigeminal ganglion.

The protein resides in the cell membrane. The catalysed reaction is Na(+)(in) = Na(+)(out). Its function is as follows. Tetrodotoxin-resistant channel that mediates the voltage-dependent sodium ion permeability of excitable membranes. Assuming opened or closed conformations in response to the voltage difference across the membrane, the protein forms a sodium-selective channel through which sodium ions may pass in accordance with their electrochemical gradient. Plays a role in neuropathic pain mechanisms. This is Sodium channel protein type 10 subunit alpha from Mus musculus (Mouse).